A 138-amino-acid chain; its full sequence is Putative pre-16S rRNA nuclease (138 aa).

This sequence belongs to the YqgF nuclease family.

It is found in the cytoplasm. Could be a nuclease involved in processing of the 5'-end of pre-16S rRNA. The sequence is that of Putative pre-16S rRNA nuclease from Escherichia coli O157:H7.